The chain runs to 228 residues: Urease accessory protein UreH (228 aa).

Transmembrane regions (helical) follow at residues 48–68, 79–99, 130–150, 162–182, and 196–216; these read VFWG…IILM, SLEF…ILSL, LFIG…LTMS, ILFF…LIGI, and AFIQ…MYNL.

The protein belongs to the NiCoT transporter (TC 2.A.52) family.

The protein resides in the cell membrane. In terms of biological role, probably facilitates nickel incorporation. May constitute a multicomponent high-affinity nickel transporter. Not essential for the expression of catalytically active urease. The chain is Urease accessory protein UreH (ureH) from Bacillus sp. (strain TB-90).